Consider the following 324-residue polypeptide: tRNA dimethylallyltransferase (324 aa).

Position 17–24 (17–24 (GPTASGKT)) interacts with ATP. 19 to 24 (TASGKT) contributes to the substrate binding site. Interaction with substrate tRNA regions lie at residues 42–45 (DSAL), 166–170 (QRIQR), 251–256 (RCVGYR), and 284–291 (KRQITWLR).

The protein belongs to the IPP transferase family. In terms of assembly, monomer. The cofactor is Mg(2+).

The catalysed reaction is adenosine(37) in tRNA + dimethylallyl diphosphate = N(6)-dimethylallyladenosine(37) in tRNA + diphosphate. Its function is as follows. Catalyzes the transfer of a dimethylallyl group onto the adenine at position 37 in tRNAs that read codons beginning with uridine, leading to the formation of N6-(dimethylallyl)adenosine (i(6)A). This chain is tRNA dimethylallyltransferase, found in Burkholderia orbicola (strain AU 1054).